The primary structure comprises 260 residues: MVLIRVLANLLILQLSYAQKSSELVIGGDECNINEHRFLVALYDVSSGDFRGSGTLINPEWVLTAAHCETEEMKLQFGLHSKRVPNKDKQTRVSKEKFFCESNKNYTKWNKDIMLIKLNRPVKNSAHIEPLSLPSSPPSVGSVCRIMGWGTLSDTEMILPDVPHCANINLLNYSDCQAAYPELPAKSRTLCAGILEGGKDTCSGDSGGPLICNGTFQGIASWGSTLCGYVREPGSYTKVFDHLDWIQSIIAGNTNVTCPL.

A signal peptide spans Met1–Ala18. Positions Gln19–Leu24 are excised as a propeptide. A Peptidase S1 domain is found at Val25 to Ala251. Disulfide bonds link Cys31–Cys165, Cys100–Cys258, Cys144–Cys212, Cys176–Cys191, and Cys202–Cys227. His67 (charge relay system) is an active-site residue. An N-linked (GlcNAc...) asparagine glycan is attached at Asn105. Asp112 serves as the catalytic Charge relay system. Residue Asn172 is glycosylated (N-linked (GlcNAc...) asparagine). Ser206 (charge relay system) is an active-site residue. Asn213 and Asn255 each carry an N-linked (GlcNAc...) asparagine glycan.

The protein belongs to the peptidase S1 family. Snake venom subfamily. In terms of assembly, monomer. Expressed by the venom gland.

It localises to the secreted. In terms of biological role, snake venom serine protease that may act in the hemostasis system of the prey. The polypeptide is Snake venom serine protease KN6 (Trimeresurus stejnegeri (Chinese green tree viper)).